The following is a 408-amino-acid chain: Type II methyltransferase M.VspI (408 aa).

Belongs to the N(4)/N(6)-methyltransferase family.

It catalyses the reaction a 2'-deoxyadenosine in DNA + S-adenosyl-L-methionine = an N(6)-methyl-2'-deoxyadenosine in DNA + S-adenosyl-L-homocysteine + H(+). Functionally, a gamma subtype methylase, recognizes the double-stranded sequence 5'-ATTAAT-3', methylates A-5 on both strands, and protects the DNA from cleavage by the VspI endonuclease. This is Type II methyltransferase M.VspI from Vibrio sp. (strain 343).